The sequence spans 170 residues: Viral interleukin-10 homolog (170 aa).

The N-terminal stretch at 1–23 is a signal peptide; the sequence is MERRLVVTLQCLVLLYLAPECGG. Disulfide bonds link C27–C119 and C73–C125. Residues 97 to 145 are a coiled coil; it reads EAKDHVNSLGENLKTLRLRLRRCHRFLPCENKSKAVEQIKNAFNKLQEK. A glycan (N-linked (GlcNAc...) asparagine; by host) is linked at N127.

Belongs to the IL-10 family. Homodimer.

Its subcellular location is the secreted. In terms of biological role, inhibits IFN-gamma synthesis. Down-regulates the expression of the host TAP1 gene (transporter associated with antigen processing), thereby affecting the transport of peptides into the endoplasmic reticulum and subsequent peptide loading by MHC class I molecules. In consequence, infected cells are masked for immune recognition by cytotoxic T-lymphocytes. This chain is Viral interleukin-10 homolog, found in Epstein-Barr virus (strain AG876) (HHV-4).